The sequence spans 293 residues: Acetylglutamate kinase (293 aa).

Substrate is bound by residues 65–66, R87, and N188; that span reads GG.

Belongs to the acetylglutamate kinase family. ArgB subfamily.

The protein localises to the cytoplasm. The enzyme catalyses N-acetyl-L-glutamate + ATP = N-acetyl-L-glutamyl 5-phosphate + ADP. It participates in amino-acid biosynthesis; L-arginine biosynthesis; N(2)-acetyl-L-ornithine from L-glutamate: step 2/4. Its function is as follows. Catalyzes the ATP-dependent phosphorylation of N-acetyl-L-glutamate. In Symbiobacterium thermophilum (strain DSM 24528 / JCM 14929 / IAM 14863 / T), this protein is Acetylglutamate kinase.